The primary structure comprises 122 residues: Large ribosomal subunit protein uL14 (122 aa).

The protein belongs to the universal ribosomal protein uL14 family. Part of the 50S ribosomal subunit. Forms a cluster with proteins L3 and L19. In the 70S ribosome, L14 and L19 interact and together make contacts with the 16S rRNA in bridges B5 and B8.

Its function is as follows. Binds to 23S rRNA. Forms part of two intersubunit bridges in the 70S ribosome. In Chlamydia muridarum (strain MoPn / Nigg), this protein is Large ribosomal subunit protein uL14.